The sequence spans 494 residues: PTS system cellobiose-specific EIIC component (494 aa).

The region spanning 8 to 481 is the PTS EIIC type-3 domain; the sequence is MEKYLVPVAA…IITFVIWVPF (474 aa). Transmembrane regions (helical) follow at residues 32–52, 92–112, 119–139, 188–208, 227–247, 274–294, 355–375, 406–426, and 463–483; these read FIGMLPATLAGALAAMISAIV, ISALVNQGTLTVIGLIFAFSW, AYGVNDLAGGIVSLATLFAGL, AYFTVIIMGALAVIIYAKLML, FLAIIPTIAALYIVGLIYYII, IFSVLIVTLFVSVFWFFGLHG, AFAWFGGSGGTITLVIAIILF, VVLNAIFFIPFAVAPLISVII, and AIVLTIINLIITFVIWVPFVI.

It is found in the cell membrane. Its function is as follows. The phosphoenolpyruvate-dependent sugar phosphotransferase system (PTS), a major carbohydrate active transport system, catalyzes the phosphorylation of incoming sugar substrates concomitant with their translocation across the cell membrane. Involved in cellobiose transport with PtcA and PtcB. This system can also transport lactose. The sequence is that of PTS system cellobiose-specific EIIC component from Lactococcus lactis subsp. lactis (strain IL1403) (Streptococcus lactis).